Reading from the N-terminus, the 209-residue chain is Thiamine-phosphate synthase (209 aa).

Residues 38–42 and N70 contribute to the 4-amino-2-methyl-5-(diphosphooxymethyl)pyrimidine site; that span reads QLREK. Residues D71 and D90 each coordinate Mg(2+). Residue S109 participates in 4-amino-2-methyl-5-(diphosphooxymethyl)pyrimidine binding. 2-[(2R,5Z)-2-carboxy-4-methylthiazol-5(2H)-ylidene]ethyl phosphate is bound at residue 135-137; that stretch reads TPT. K138 lines the 4-amino-2-methyl-5-(diphosphooxymethyl)pyrimidine pocket. 2-[(2R,5Z)-2-carboxy-4-methylthiazol-5(2H)-ylidene]ethyl phosphate contacts are provided by residues G166 and 186-187; that span reads IS.

This sequence belongs to the thiamine-phosphate synthase family. The cofactor is Mg(2+).

It carries out the reaction 2-[(2R,5Z)-2-carboxy-4-methylthiazol-5(2H)-ylidene]ethyl phosphate + 4-amino-2-methyl-5-(diphosphooxymethyl)pyrimidine + 2 H(+) = thiamine phosphate + CO2 + diphosphate. It catalyses the reaction 2-(2-carboxy-4-methylthiazol-5-yl)ethyl phosphate + 4-amino-2-methyl-5-(diphosphooxymethyl)pyrimidine + 2 H(+) = thiamine phosphate + CO2 + diphosphate. The enzyme catalyses 4-methyl-5-(2-phosphooxyethyl)-thiazole + 4-amino-2-methyl-5-(diphosphooxymethyl)pyrimidine + H(+) = thiamine phosphate + diphosphate. It functions in the pathway cofactor biosynthesis; thiamine diphosphate biosynthesis; thiamine phosphate from 4-amino-2-methyl-5-diphosphomethylpyrimidine and 4-methyl-5-(2-phosphoethyl)-thiazole: step 1/1. In terms of biological role, condenses 4-methyl-5-(beta-hydroxyethyl)thiazole monophosphate (THZ-P) and 2-methyl-4-amino-5-hydroxymethyl pyrimidine pyrophosphate (HMP-PP) to form thiamine monophosphate (TMP). The polypeptide is Thiamine-phosphate synthase (Syntrophomonas wolfei subsp. wolfei (strain DSM 2245B / Goettingen)).